A 400-amino-acid polypeptide reads, in one-letter code: Putative C-type lectin domain family 20 member A (400 aa).

The signal sequence occupies residues M1–S20. C-type lectin domains follow at residues L26–Y131 and I159–F275. Cystine bridges form between C40–C130, C105–C122, C180–C274, and C248–C266. The segment at E287–G346 is disordered.

This chain is Putative C-type lectin domain family 20 member A, found in Homo sapiens (Human).